A 222-amino-acid chain; its full sequence is Eukaryotic translation initiation factor 3 subunit K (222 aa).

Residues 46 to 208 form the PCI domain; the sequence is YDLEANLAVL…KIKTKNITEK (163 aa).

This sequence belongs to the eIF-3 subunit K family. As to quaternary structure, component of the eukaryotic translation initiation factor 3 (eIF-3) complex. The eIF-3 complex interacts with pix.

It is found in the cytoplasm. Functionally, component of the eukaryotic translation initiation factor 3 (eIF-3) complex, which is involved in protein synthesis of a specialized repertoire of mRNAs and, together with other initiation factors, stimulates binding of mRNA and methionyl-tRNAi to the 40S ribosome. The eIF-3 complex specifically targets and initiates translation of a subset of mRNAs involved in cell proliferation. This Drosophila erecta (Fruit fly) protein is Eukaryotic translation initiation factor 3 subunit K.